The chain runs to 379 residues: Alanine racemase (379 aa).

The active-site Proton acceptor; specific for D-alanine is Lys-35. An N6-(pyridoxal phosphate)lysine modification is found at Lys-35. Arg-133 is a binding site for substrate. Tyr-265 functions as the Proton acceptor; specific for L-alanine in the catalytic mechanism. Met-312 is a substrate binding site.

Belongs to the alanine racemase family. The cofactor is pyridoxal 5'-phosphate.

The catalysed reaction is L-alanine = D-alanine. It participates in amino-acid biosynthesis; D-alanine biosynthesis; D-alanine from L-alanine: step 1/1. In terms of biological role, catalyzes the interconversion of L-alanine and D-alanine. May also act on other amino acids. This chain is Alanine racemase (alr), found in Treponema denticola (strain ATCC 35405 / DSM 14222 / CIP 103919 / JCM 8153 / KCTC 15104).